Consider the following 393-residue polypeptide: Na(+)/H(+) antiporter NhaA (393 aa).

12 consecutive transmembrane segments (helical) span residues 23–43 (AGGI…NSPF), 58–78 (LSLA…LVGL), 96–116 (MLPG…FAVL), 126–146 (GWAV…SLLG), 155–175 (VFLA…IAIF), 178–198 (AEIS…LFVM), 201–221 (MGVV…FFVF), 224–244 (GVHA…KPAP), 265–285 (VAFI…FKGL), 298–318 (ILLG…WLAI), 334–354 (LYGV…IGLL), and 367–387 (IGVL…LRAA).

The protein belongs to the NhaA Na(+)/H(+) (TC 2.A.33) antiporter family.

The protein localises to the cell inner membrane. The enzyme catalyses Na(+)(in) + 2 H(+)(out) = Na(+)(out) + 2 H(+)(in). In terms of biological role, na(+)/H(+) antiporter that extrudes sodium in exchange for external protons. In Brucella canis (strain ATCC 23365 / NCTC 10854 / RM-666), this protein is Na(+)/H(+) antiporter NhaA.